Reading from the N-terminus, the 476-residue chain is MNNAVKEQLAELGIEGYLNQHQHKSLLRFLTCGSVDDGKSTLIGRLLHDSKQIYEDQLAAVHNDSQRVGTTGSRPDLALLVDGLQAEREQGITIDVAYRYFSTQKRKFIIADTPGHEQYTRNMATGASTCDLAVILIDARKGVLDQTRRHSFISNLLGLKHFIVAVNKMDLVDYSQDRFEQIRAEYLEFSKHLQGETEIQIIPLSALEGDNVVEKSRLMDWYQGPSLLELLENVDIDRDKSSGAFRFPVQYVNRPNLDFRGFAGTIASGVVKVGDKIKALPSGKTSTVTRIVTFDGDLPQAQAGLAVTLTLADEIDISRGDLIVLESAQVDSTNHLLADVVWMTEQPLQVGRDYDIKIAGKKTVGQVKAVRHQYDINNLSTYHAESLPLNGIGLCEWTFTQTVALDKYLDCADTGGFIIIDRLTNVTVGAGLVRDSLQNITGQTESFSAFELELNALVRKHFPHWQAIDLSRLGKA.

Residues 24–240 (KSLLRFLTCG…LENVDIDRDK (217 aa)) enclose the tr-type G domain. Residues 33-40 (GSVDDGKS) form a G1 region. Residue 33-40 (GSVDDGKS) participates in GTP binding. The interval 91 to 95 (GITID) is G2. A G3 region spans residues 112–115 (DTPG). Residues 112 to 116 (DTPGH) and 167 to 170 (NKMD) contribute to the GTP site. The interval 167–170 (NKMD) is G4. The interval 205–207 (SAL) is G5.

It belongs to the TRAFAC class translation factor GTPase superfamily. Classic translation factor GTPase family. CysN/NodQ subfamily. Heterodimer composed of CysD, the smaller subunit, and CysN.

The enzyme catalyses sulfate + ATP + H(+) = adenosine 5'-phosphosulfate + diphosphate. It functions in the pathway sulfur metabolism; hydrogen sulfide biosynthesis; sulfite from sulfate: step 1/3. With CysD forms the ATP sulfurylase (ATPS) that catalyzes the adenylation of sulfate producing adenosine 5'-phosphosulfate (APS) and diphosphate, the first enzymatic step in sulfur assimilation pathway. APS synthesis involves the formation of a high-energy phosphoric-sulfuric acid anhydride bond driven by GTP hydrolysis by CysN coupled to ATP hydrolysis by CysD. This Vibrio cholerae serotype O1 (strain ATCC 39541 / Classical Ogawa 395 / O395) protein is Sulfate adenylyltransferase subunit 1.